The following is a 63-amino-acid chain: MRCLPVFVILLLLIASTPSDTVPLKTKDDMPQASFHGNARRTLQMLSKKQCCWYFDISCCITV.

The N-terminal stretch at 1 to 19 (MRCLPVFVILLLLIASTPS) is a signal peptide. The propeptide occupies 20–47 (DTVPLKTKDDMPQASFHGNARRTLQMLS).

This sequence belongs to the conotoxin T superfamily. Contains 2 disulfide bonds that can be either 'C1-C3, C2-C4' or 'C1-C4, C2-C3', since these disulfide connectivities have been observed for conotoxins with cysteine framework V (for examples, see AC P0DQQ7 and AC P81755). Expressed by the venom duct.

It localises to the secreted. This chain is Conotoxin Tx-D0111, found in Conus textile (Cloth-of-gold cone).